The following is a 103-amino-acid chain: Large ribosomal subunit protein bL21 (103 aa).

The protein belongs to the bacterial ribosomal protein bL21 family. Part of the 50S ribosomal subunit. Contacts protein L20.

Functionally, this protein binds to 23S rRNA in the presence of protein L20. This Legionella pneumophila (strain Paris) protein is Large ribosomal subunit protein bL21.